The sequence spans 948 residues: MKKNNTILYYGCAAQARYASSNHGLLYSPSQAHLFNFSLARTYLNFSNGFRAFSTSLHLSYNQPLITYDLQDHTIDIEEMKKENLEKSFKSNTYIFKCLLNTINNKPINEKTQMEIEELLNKFTYASFSKKLEANQKNPEIIDYSLLNPKLAAILTDVRPTLISIINNLQKDYPDYFMAKLFKKSDKNEYYIGLVIKGLTPEEIINSIFFHVLKVLSFHTKKLDKSNSTSDIAFGMGKVLVENFYYNEFIKIKNKLSKEEQKCYYLSNWKKDNKDIVEKLEDNIFQFLLGQKISNLTKDTDLLDMETVTMAYREKSIVWKPTKKILKVLPEDGTLFVLPKKIPMIVKPKPYTTRVNGGYLSNDLYINENIVKEKWNLRDNTQILHFNQIFDLVNNLSSIGYKINTDVLDFIELYGSDYFKNELIDPRYSHPLLKKSKLTKKEKMELDSFLAKKELQENILGLAEIFRNIPEFFIPVNADFRGRVYCTPEYLNYQSTDLAKSLLLFSKPGRMYKKDYIALSYLKIYGGSSFGLDKLSANDRIKWVDKNLNNIKNYRNGKLIKEAKNKFLFLAFCIEYNRYLNCLDNHDVSWFDTYLPIQMDATCNGFQHLSLLSLDSNLSKELNLSESTWDDVPKDFYTFLVVCFIDYLKTELLENKNLTPKESESYNRLINMKIIREIIKKGIMTIPYNVSNFSLINYIREGFELEDNSLEWYIYKNEPSIRLKSLDFTVLGKGLRKVLHEKFHKLDLLLKYLDQVARVCTLLEIPIIWTLPTGLVVRQSYMIRDEVRIKPFNHSNKKFSMKVLNKTQFNNSKQITAFMPNLVHSLDAASLTLLLDFYFKESIDVKNIYTIHDCFAVPANKMECLISLLKLTYIKLYSDDKYLLKLDDDIRKNIRSTQNKGCFNEETLEITGDSFPDPIKFPDVQKVIGIVPSDFDFNVLKKSSYILN.

Catalysis depends on residues Asp600, Lys680, and Asp853.

It belongs to the phage and mitochondrial RNA polymerase family.

Its subcellular location is the mitochondrion. The catalysed reaction is RNA(n) + a ribonucleoside 5'-triphosphate = RNA(n+1) + diphosphate. DNA-dependent RNA polymerase catalyzes the transcription of DNA into RNA using the four ribonucleoside triphosphates as substrates. The sequence is that of Probable DNA-directed RNA polymerase from Podospora anserina (Pleurage anserina).